A 751-amino-acid chain; its full sequence is Glutathione biosynthesis bifunctional protein GshAB (751 aa).

The tract at residues 1–336 is glutamate--cysteine ligase; sequence MELDAVGKAI…QADQLTRQVL (336 aa).

The protein in the N-terminal section; belongs to the glutamate--cysteine ligase type 1 family. Type 2 subfamily. Monomer.

It carries out the reaction L-cysteine + L-glutamate + ATP = gamma-L-glutamyl-L-cysteine + ADP + phosphate + H(+). The catalysed reaction is gamma-L-glutamyl-L-cysteine + glycine + ATP = glutathione + ADP + phosphate + H(+). Its pathway is sulfur metabolism; glutathione biosynthesis; glutathione from L-cysteine and L-glutamate: step 1/2. The protein operates within sulfur metabolism; glutathione biosynthesis; glutathione from L-cysteine and L-glutamate: step 2/2. Functionally, synthesizes glutathione from L-glutamate and L-cysteine via gamma-L-glutamyl-L-cysteine. This is Glutathione biosynthesis bifunctional protein GshAB (gshAB) from Lactiplantibacillus plantarum (strain ATCC BAA-793 / NCIMB 8826 / WCFS1) (Lactobacillus plantarum).